The chain runs to 228 residues: Thrombin-like enzyme gyroxin analog (228 aa).

The 222-residue stretch at 1–222 folds into the Peptidase S1 domain; sequence VIGGDECNIN…YLDWIQSVIA (222 aa). Cystine bridges form between Cys7/Cys138, Cys28/Cys44, Cys78/Cys227, Cys117/Cys183, Cys149/Cys162, and Cys173/Cys198. The active-site Charge relay system is the His43. Asn45 and Asn81 each carry an N-linked (GlcNAc...) asparagine glycan. Asp88 functions as the Charge relay system in the catalytic mechanism. Asn145 carries an N-linked (GlcNAc...) asparagine glycan. The Charge relay system role is filled by Ser177. N-linked (GlcNAc...) asparagine glycosylation is present at Asn224.

This sequence belongs to the peptidase S1 family. Snake venom subfamily. In terms of assembly, monomer. As to expression, expressed by the venom gland.

The protein resides in the secreted. The catalysed reaction is Selective cleavage of Arg-|-Xaa bond in fibrinogen, to form fibrin, and release fibrinopeptide A. The specificity of further degradation of fibrinogen varies with species origin of the enzyme.. With respect to regulation, inhibited competitively by amidines and guanidines, and irreversibly inhibited by diisopropylfluorophosphate. In terms of biological role, thrombin-like snake venom serine protease, that cleaves alpha-chain of fibrinogen (FGA) releases only fibrinopeptide A. Shows coagulant, esterase and amidase activities. Induces the barrel rotation syndrome in mice, which is manifested by gyroxin-like, rapid rolling motions. May also reversibly increase the permeability of the blood brain barrier (BBB) in mice. The chain is Thrombin-like enzyme gyroxin analog from Lachesis muta muta (Bushmaster).